The chain runs to 478 residues: Ribosomal RNA small subunit methyltransferase F (478 aa).

Residues 121 to 127 (ASAPGSK), Glu-145, Asp-172, and Asp-190 each bind S-adenosyl-L-methionine. Cys-243 acts as the Nucleophile in catalysis.

This sequence belongs to the class I-like SAM-binding methyltransferase superfamily. RsmB/NOP family.

It localises to the cytoplasm. It catalyses the reaction cytidine(1407) in 16S rRNA + S-adenosyl-L-methionine = 5-methylcytidine(1407) in 16S rRNA + S-adenosyl-L-homocysteine + H(+). Its function is as follows. Specifically methylates the cytosine at position 1407 (m5C1407) of 16S rRNA. The sequence is that of Ribosomal RNA small subunit methyltransferase F from Shewanella woodyi (strain ATCC 51908 / MS32).